The sequence spans 464 residues: E3 ubiquitin-protein ligase MYLIP-B (464 aa).

The region spanning 1–279 (MLCHITRPDS…EIHAFYRCDT (279 aa)) is the FERM domain. The RING-type zinc-finger motif lies at 381–416 (CALCCEQEISAAFCPCGHMFCCYNCASQLQCCPVCR).

In terms of assembly, interacts with anxa5.

Its subcellular location is the cytoplasm. It localises to the cytosol. The enzyme catalyses S-ubiquitinyl-[E2 ubiquitin-conjugating enzyme]-L-cysteine + [acceptor protein]-L-lysine = [E2 ubiquitin-conjugating enzyme]-L-cysteine + N(6)-ubiquitinyl-[acceptor protein]-L-lysine.. Its pathway is protein modification; protein ubiquitination. E3 ubiquitin-protein ligase that mediates ubiquitination and subsequent proteasomal degradation of myosin regulatory light chain (MRLC). Regulates cell movements during gastrulation by acting downstream of fz7 to antagonize the frizzled-signaling pathway. The protein is E3 ubiquitin-protein ligase MYLIP-B of Danio rerio (Zebrafish).